The chain runs to 385 residues: Protein pelota homolog (385 aa).

It belongs to the eukaryotic release factor 1 family. Pelota subfamily. Component of the Pelota-HBS1L complex, also named Dom34-Hbs1 complex, composed of PELO and HBS1L. A divalent metal cation serves as cofactor.

The protein localises to the cytoplasm. Functionally, component of the Pelota-HBS1L complex, a complex that recognizes stalled ribosomes and triggers the No-Go Decay (NGD) pathway. In the Pelota-HBS1L complex, PELO recognizes ribosomes stalled at the 3' end of an mRNA and engages stalled ribosomes by destabilizing mRNA in the mRNA channel. Following mRNA extraction from stalled ribosomes by the SKI complex, the Pelota-HBS1L complex promotes recruitment of ABCE1, which drives the disassembly of stalled ribosomes, followed by degradation of damaged mRNAs as part of the NGD pathway. The polypeptide is Protein pelota homolog (PELO) (Gallus gallus (Chicken)).